A 682-amino-acid polypeptide reads, in one-letter code: Glutamine--fructose-6-phosphate aminotransferase [isomerizing] 2 (682 aa).

C2 functions as the For GATase activity in the catalytic mechanism. Residues 2–288 (CGIFAYMNYR…DDDIAAVADG (287 aa)) enclose the Glutamine amidotransferase type-2 domain. Phosphoserine is present on S244. 2 SIS domains span residues 360-499 (HLKE…DRIS) and 531-672 (LALE…VDFP). Substrate-binding positions include 377-378 (TS), 422-424 (SQS), T427, and H578.

Highest levels of expression in heart, placenta, and spinal cord.

It catalyses the reaction D-fructose 6-phosphate + L-glutamine = D-glucosamine 6-phosphate + L-glutamate. The protein operates within nucleotide-sugar biosynthesis; UDP-N-acetyl-alpha-D-glucosamine biosynthesis; alpha-D-glucosamine 6-phosphate from D-fructose 6-phosphate: step 1/1. Functionally, controls the flux of glucose into the hexosamine pathway. Most likely involved in regulating the availability of precursors for N- and O-linked glycosylation of proteins. This Homo sapiens (Human) protein is Glutamine--fructose-6-phosphate aminotransferase [isomerizing] 2 (GFPT2).